A 425-amino-acid chain; its full sequence is Alpha-(1,3)-fucosyltransferase C (425 aa).

At 1-37 the chain is on the cytoplasmic side; it reads MYLGRVHCSFEVPGLLSGRVGHMSMAVRSVRLACGPR. Residues 38–58 form a helical; Signal-anchor for type II membrane protein membrane-spanning segment; the sequence is GALLLLLLVLLGVLVVLHKVT. The Lumenal portion of the chain corresponds to 59–425; the sequence is QSPLLNQNKI…SCRLQSRIRL (367 aa). Residues N187 and N230 are each glycosylated (N-linked (GlcNAc...) asparagine).

The protein belongs to the glycosyltransferase 10 family.

It localises to the golgi apparatus. It is found in the golgi stack membrane. It participates in protein modification; protein glycosylation. This is Alpha-(1,3)-fucosyltransferase C (FucTC) from Drosophila melanogaster (Fruit fly).